A 363-amino-acid polypeptide reads, in one-letter code: Peptide-N(4)-(N-acetyl-beta-glucosaminyl)asparagine amidase (363 aa).

Residues Cys-129, Cys-132, Cys-165, and Cys-168 each contribute to the Zn(2+) site. Residue Cys-191 is the Nucleophile of the active site. Catalysis depends on residues His-218 and Asp-235. Glu-238 contacts substrate. Positions 325–363 are disordered; the sequence is RGKTQETKSESVSAASKSSNRGRESGSADWKAQRGEDGK. Residues 334–343 show a composition bias toward low complexity; sequence ESVSAASKSS. Over residues 345–363 the composition is skewed to basic and acidic residues; sequence RGRESGSADWKAQRGEDGK.

This sequence belongs to the transglutaminase-like superfamily. PNGase family. In terms of assembly, interacts with RAD23 subunit of 26S proteasome. Zn(2+) is required as a cofactor.

The protein resides in the cytoplasm. It is found in the nucleus. It catalyses the reaction Hydrolysis of an N(4)-(acetyl-beta-D-glucosaminyl)asparagine residue in which the glucosamine residue may be further glycosylated, to yield a (substituted) N-acetyl-beta-D-glucosaminylamine and a peptide containing an aspartate residue.. Inhibited by Z-VAD-fmk, a well-known caspase inhibitor. Also inhibited by Man9GlcNAc2-iodoacetoamide. Both molecules inhibit enzyme activity through covalent binding of the carbohydrate to the single Cys-191 residue. Functionally, specifically deglycosylates the denatured form of N-linked glycoproteins in the cytoplasm and assists their proteasome-mediated degradation. Cleaves the beta-aspartyl-glucosamine (GlcNAc) of the glycan and the amide side chain of Asn, converting Asn to Asp. Prefers proteins containing high-mannose over those bearing complex type oligosaccharides. Can recognize misfolded proteins in the endoplasmic reticulum that are exported to the cytosol to be destroyed and deglycosylate them, while it has no activity toward native proteins. Deglycosylation is a prerequisite for subsequent proteasome-mediated degradation of some, but not all, misfolded glycoproteins. Involved in the formation of free oligosaccharide in cytosol. The chain is Peptide-N(4)-(N-acetyl-beta-glucosaminyl)asparagine amidase (PNG1) from Saccharomyces cerevisiae (strain ATCC 204508 / S288c) (Baker's yeast).